The sequence spans 172 residues: MLSSLQNPRQAAAQLMNFGLILSTAFMMWKGLSVITDSPSPIVVVLSGSMEPAFQRGDLLLLWNRNLISETNVGEIVVYNVKGKDIPIVHRIVRKFGVGPDAKLLTKGDNNAADDTELYARGQDYLNRKDIVGSVVGYMPFVGYVTIMLSEHPWLKTVMLGIMGLVVVLQRE.

Residues 1-14 (MLSSLQNPRQAAAQ) lie on the Cytoplasmic side of the membrane. A helical; Signal-anchor for type II membrane protein transmembrane segment spans residues 15-35 (LMNFGLILSTAFMMWKGLSVI). The Lumenal portion of the chain corresponds to 36–172 (TDSPSPIVVV…MGLVVVLQRE (137 aa)). Active-site charge relay system residues include S49, H90, and D115. The C-terminal short (CTS) helix stretch occupies residues 158 to 169 (VMLGIMGLVVVL).

It belongs to the peptidase S26B family. Component of the signal peptidase complex (SPC) composed of a catalytic subunit SEC11 and three accessory subunits SPC1, SPC2 and SPC3. The complex induces a local thinning of the ER membrane which is used to measure the length of the signal peptide (SP) h-region of protein substrates. This ensures the selectivity of the complex towards h-regions shorter than 18-20 amino acids. SPC associates with the translocon complex.

Its subcellular location is the endoplasmic reticulum membrane. The enzyme catalyses Cleavage of hydrophobic, N-terminal signal or leader sequences from secreted and periplasmic proteins.. Catalytic component of the signal peptidase complex (SPC) which catalyzes the cleavage of N-terminal signal sequences from nascent proteins as they are translocated into the lumen of the endoplasmic reticulum. Specifically cleaves N-terminal signal peptides that contain a hydrophobic alpha-helix (h-region) shorter than 18-20 amino acids. The chain is Signal peptidase complex catalytic subunit SEC11 (SEC11) from Chaetomium globosum (strain ATCC 6205 / CBS 148.51 / DSM 1962 / NBRC 6347 / NRRL 1970) (Soil fungus).